A 74-amino-acid polypeptide reads, in one-letter code: Molt-inhibiting hormone (74 aa).

Residue Q1 is modified to Pyrrolidone carboxylic acid. 3 disulfide bridges follow: C7-C43, C23-C39, and C26-C52. V72 is modified (valine amide).

The protein resides in the secreted. Functionally, inhibits Y-organs where molting hormone (ecdysteroid) is secreted. A molting cycle is initiated when MIH secretion diminishes or stops. The chain is Molt-inhibiting hormone from Procambarus bouvieri (Mexican crayfish).